The chain runs to 377 residues: Succinyl-diaminopimelate desuccinylase (377 aa).

Histidine 67 is a Zn(2+) binding site. Residue aspartate 69 is part of the active site. Zn(2+) is bound at residue aspartate 100. Glutamate 134 serves as the catalytic Proton acceptor. Positions 135, 163, and 349 each coordinate Zn(2+).

The protein belongs to the peptidase M20A family. DapE subfamily. As to quaternary structure, homodimer. Zn(2+) is required as a cofactor. Requires Co(2+) as cofactor.

It carries out the reaction N-succinyl-(2S,6S)-2,6-diaminopimelate + H2O = (2S,6S)-2,6-diaminopimelate + succinate. It functions in the pathway amino-acid biosynthesis; L-lysine biosynthesis via DAP pathway; LL-2,6-diaminopimelate from (S)-tetrahydrodipicolinate (succinylase route): step 3/3. Functionally, catalyzes the hydrolysis of N-succinyl-L,L-diaminopimelic acid (SDAP), forming succinate and LL-2,6-diaminopimelate (DAP), an intermediate involved in the bacterial biosynthesis of lysine and meso-diaminopimelic acid, an essential component of bacterial cell walls. This is Succinyl-diaminopimelate desuccinylase from Buchnera aphidicola subsp. Baizongia pistaciae (strain Bp).